We begin with the raw amino-acid sequence, 185 residues long: Adenylyl-sulfate kinase (185 aa).

Position 13–20 (13–20 (GLSGAGKT)) interacts with ATP. The active-site Phosphoserine intermediate is serine 87.

It belongs to the APS kinase family.

The enzyme catalyses adenosine 5'-phosphosulfate + ATP = 3'-phosphoadenylyl sulfate + ADP + H(+). It functions in the pathway sulfur metabolism; hydrogen sulfide biosynthesis; sulfite from sulfate: step 2/3. In terms of biological role, catalyzes the synthesis of activated sulfate. This is Adenylyl-sulfate kinase from Halothermothrix orenii (strain H 168 / OCM 544 / DSM 9562).